A 1523-amino-acid chain; its full sequence is TALPID3 protein (1523 aa).

Positions 1–16 (MEAESGSSTSQDSLAS) are enriched in polar residues. Disordered stretches follow at residues 1 to 20 (MEAE…LTAG) and 57 to 84 (SRQA…ASNG). Coiled-coil stretches lie at residues 428–466 (IEKT…MNDL) and 499–528 (ILSD…LRAK). The interval 498–585 (SILSDAKRVL…MEQVKYDQKV (88 aa)) is required for centrosomal localization. Disordered stretches follow at residues 1070–1112 (EPLV…LSGD), 1137–1262 (VITP…SEGE), 1294–1313 (ANEM…RSHK), 1373–1410 (DIDH…DADT), and 1498–1523 (SMNI…ADTF). The span at 1073–1088 (VPTPLPTPQATPPQTP) shows a compositional bias: pro residues. Polar residues predominate over residues 1099-1108 (TPESSPSITE). Composition is skewed to low complexity over residues 1137–1149 (VITP…EIIT) and 1236–1251 (SSEQ…PTET). Residues 1373–1386 (DIDHATARASEDRP) are compositionally biased toward basic and acidic residues. Residues 1507–1523 (SLSSIHGDSDSSGADTF) show a composition bias toward low complexity.

This sequence belongs to the TALPID3 family. Ubiquitously expressed.

It localises to the cytoplasm. The protein localises to the cytoskeleton. Its subcellular location is the microtubule organizing center. It is found in the centrosome. Functionally, required for ciliogenesis and sonic hedgehog/SHH signaling. Independently, involved in regulation of cell intracellular organization. Involved in regulation of cell polarity. This is TALPID3 protein (TALPID3) from Gallus gallus (Chicken).